A 290-amino-acid chain; its full sequence is Putative phosphoenolpyruvate synthase regulatory protein (290 aa).

170 to 177 (GVSRCGKT) contributes to the ADP binding site.

This sequence belongs to the pyruvate, phosphate/water dikinase regulatory protein family. PSRP subfamily.

The catalysed reaction is [pyruvate, water dikinase] + ADP = [pyruvate, water dikinase]-phosphate + AMP + H(+). The enzyme catalyses [pyruvate, water dikinase]-phosphate + phosphate + H(+) = [pyruvate, water dikinase] + diphosphate. Functionally, bifunctional serine/threonine kinase and phosphorylase involved in the regulation of the phosphoenolpyruvate synthase (PEPS) by catalyzing its phosphorylation/dephosphorylation. This is Putative phosphoenolpyruvate synthase regulatory protein (ydiA) from Enterobacter agglomerans (Erwinia herbicola).